The sequence spans 506 residues: Acrylate reductase flavoprotein subunit (506 aa).

The segment at residues 1 to 30 (MSNKDLLGRRNFIKGMGAAAGVAMAAPALA) is a signal peptide (tat-type signal). FAD-binding residues include alanine 54, glutamate 74, asparagine 82, glycine 87, and glycine 88. Catalysis depends on arginine 333, which acts as the Proton donor. Glutamate 473 and isoleucine 489 together coordinate FAD.

Belongs to the FAD-dependent oxidoreductase 2 family. FRD/SDH subfamily. As to quaternary structure, the ArdAB flavocytochrome c is composed of a FAD-containing subunit (ArdA) and a heme c-containing subunit (ArdB). Requires FAD as cofactor. In terms of processing, predicted to be exported by the Tat system. The position of the signal peptide cleavage has not been experimentally proven.

It is found in the periplasm. Methacrylate acts as a competitive inhibitor of the acrylate reductase activity and suppresses the reductase activity in dose-dependent manner. FAD-containing subunit of the ArdAB flavocytochrome c, which catalyzes the reduction of acrylate to propanoate and supports dimethylsulfoniopropionate-dependent anaerobic respiration. In vitro, can use the artificial electron donor methyl viologen. The natural electron donor is probably a low-potential cytochrome c. Also shows weak activity toward methacrylate in vitro (at a 22-fold lower rate) but cannot use other tested 2-enoates, including crotonic, fumaric, sorbic, urocanic, cinnamic, p-coumaric, caffeic or ferulic acids. The protein catalyzes a unidirectional reaction and cannot oxidize propanoate with phenazine metasulfate and dichlorophenolindophenol as electron acceptors. This is Acrylate reductase flavoprotein subunit from Shewanella woodyi (strain ATCC 51908 / MS32).